We begin with the raw amino-acid sequence, 155 residues long: Cytochrome c-type biogenesis protein CcmE (155 aa).

The Cytoplasmic portion of the chain corresponds to 1–8 (MHPKRKQR). A helical; Signal-anchor for type II membrane protein membrane pass occupies residues 9 to 29 (LILVLFVVLVSSVGVSLTLYA). At 30 to 155 (LNENINLFYP…KTCKGISYDS (126 aa)) the chain is on the periplasmic side. Residues His124 and Tyr128 each contribute to the heme site.

It belongs to the CcmE/CycJ family.

The protein localises to the cell inner membrane. Heme chaperone required for the biogenesis of c-type cytochromes. Transiently binds heme delivered by CcmC and transfers the heme to apo-cytochromes in a process facilitated by CcmF and CcmH. The polypeptide is Cytochrome c-type biogenesis protein CcmE (Teredinibacter turnerae (strain ATCC 39867 / T7901)).